The chain runs to 495 residues: Ectonucleoside triphosphate diphosphohydrolase 8 (495 aa).

Topologically, residues 1–8 (MGLTWKQR) are cytoplasmic. A helical transmembrane segment spans residues 9–29 (VFTALLGAAAVSGLTALLLVL). The Extracellular segment spans residues 30–466 (VGTMNVLLPP…PAQGWAQSFG (437 aa)). Cys78 and Cys102 are disulfide-bonded. Glu168 serves as the catalytic Proton acceptor. The cysteines at positions 246 and 292 are disulfide-linked. N-linked (GlcNAc...) asparagine glycans are attached at residues Asn303 and Asn324. 2 cysteine pairs are disulfide-bonded: Cys328-Cys334 and Cys380-Cys403. A helical membrane pass occupies residues 467–487 (VWAAGVVFVVLTLAATLGAVA). Residues 488-495 (VQVFWLQD) are Cytoplasmic-facing.

It belongs to the GDA1/CD39 NTPase family. Ca(2+) serves as cofactor. Requires Mg(2+) as cofactor. N-glycosylated.

It localises to the cell membrane. The enzyme catalyses a ribonucleoside 5'-triphosphate + 2 H2O = a ribonucleoside 5'-phosphate + 2 phosphate + 2 H(+). In terms of biological role, canalicular ectonucleoside NTPDase responsible for the main hepatic NTPDase activity. Ectonucleoside NTPDases catalyze the hydrolysis of gamma- and beta-phosphate residues of nucleotides, playing a central role in concentration of extracellular nucleotides. Has activity toward ATP, ADP, UTP and UDP, but not toward AMP. The chain is Ectonucleoside triphosphate diphosphohydrolase 8 (ENTPD8) from Bos taurus (Bovine).